The chain runs to 411 residues: Adenylosuccinate synthetase (411 aa).

GTP is bound by residues 11 to 17 (GDEGKGK) and 39 to 41 (GHT). The active-site Proton acceptor is the Asp12. Residues Asp12 and Gly39 each contribute to the Mg(2+) site. IMP-binding positions include 12–15 (DEGK), 37–40 (NAGH), Thr121, Arg135, Gln215, Thr230, and Arg294. The Proton donor role is filled by His40. 290 to 296 (TTTKRPR) contributes to the substrate binding site. GTP-binding positions include Arg296, 322-324 (KLD), and 400-402 (STS).

This sequence belongs to the adenylosuccinate synthetase family. Homodimer. It depends on Mg(2+) as a cofactor.

The protein resides in the cytoplasm. The catalysed reaction is IMP + L-aspartate + GTP = N(6)-(1,2-dicarboxyethyl)-AMP + GDP + phosphate + 2 H(+). It participates in purine metabolism; AMP biosynthesis via de novo pathway; AMP from IMP: step 1/2. Plays an important role in the de novo pathway of purine nucleotide biosynthesis. Catalyzes the first committed step in the biosynthesis of AMP from IMP. In Helicobacter pylori (strain Shi470), this protein is Adenylosuccinate synthetase.